The chain runs to 412 residues: G-protein coupled receptor homolog UL33 (412 aa).

Residues 1–29 lie on the Virion surface side of the membrane; that stretch reads MDTIIHNSTRNNTPPHINDTCNMTGPLFA. N-linked (GlcNAc...) asparagine; by host glycosylation is found at Asn-7, Asn-18, and Asn-22. A helical transmembrane segment spans residues 30 to 54; that stretch reads IRTTEAVLNTFIIFVGGPLNAIVLI. Topologically, residues 55–70 are intravirion; it reads TQLLTNRVLGYSTPTI. The chain crosses the membrane as a helical span at residues 71–95; it reads YMTNLYSTNFLTLTVLPFIVLSNQW. Over 96–102 the chain is Virion surface; that stretch reads LLPAGVA. Residues 103–129 traverse the membrane as a helical segment; it reads SCKFLSVIYYSSCTVGFATVALIAADR. Cys-104 and Cys-188 are oxidised to a cystine. Residues 130–138 lie on the Intravirion side of the membrane; that stretch reads YRVLHKRTY. A helical transmembrane segment spans residues 139-160; it reads ARQSYRSTYMILLLTWLAGLIF. Residues 161 to 203 lie on the Virion surface side of the membrane; the sequence is SVPAAVYTTVVMHHDANDTNNTNGHATCVLYFVAEEVHTVLLS. N-linked (GlcNAc...) asparagine; by host glycans are attached at residues Asn-177 and Asn-180. The helical transmembrane segment at 204–224 threads the bilayer; it reads WKVLLTMVWGAAPVIMMTWFY. The Intravirion segment spans residues 225-240; the sequence is AFFYSTVQRTSQKQRS. A helical transmembrane segment spans residues 241-267; it reads RTLTFVSVLLISFVALQTPYVSLMIFN. Residues 268–281 lie on the Virion surface side of the membrane; the sequence is SYATTAWPMQCEHL. Residues 282-305 traverse the membrane as a helical segment; it reads TLRRTIGTLARVVPHLHCLINPIL. Residues 306 to 412 lie on the Intravirion side of the membrane; that stretch reads YALLGHDFLQ…SQSHHNLSGV (107 aa). Residues 377–412 are disordered; the sequence is NFPSGTWKGGQKTASNDTSTKIPHRLSQSHHNLSGV. Positions 388–397 are enriched in polar residues; it reads KTASNDTSTK.

It belongs to the G-protein coupled receptor 1 family. As to quaternary structure, heterodimerizes with US28.

Its subcellular location is the virion. It localises to the host cell membrane. It is found in the host cytoplasm. Its function is as follows. G-protein-coupled receptor (vGPCR) that constitutively activates multiple oncogenic signaling pathways including STAT3, AP-1, phospholipase C, NF-kappa-B or cAMP-responsive element (CRE) pathways. Plays an important role in viral reactivation from latency through activation of host CREB1, facilitating its recruitment to the viral major immediate early (MIE) genes. In turn, expression of the MIE-driven genes such as UL123 are de-repressed. Also facilitates virus dissemination via the extracellular and cell-to-cell route. This Human cytomegalovirus (strain AD169) (HHV-5) protein is G-protein coupled receptor homolog UL33 (UL33).